The sequence spans 260 residues: Phosphate import ATP-binding protein PstB (260 aa).

The ABC transporter domain maps to 14 to 255; the sequence is IETENLSLFY…PKNTKTEEYI (242 aa). 46–53 lines the ATP pocket; sequence GPSGCGKS.

The protein belongs to the ABC transporter superfamily. Phosphate importer (TC 3.A.1.7) family. The complex is composed of two ATP-binding proteins (PstB), two transmembrane proteins (PstC and PstA) and a solute-binding protein (PstS).

The protein resides in the cell inner membrane. The enzyme catalyses phosphate(out) + ATP + H2O = ADP + 2 phosphate(in) + H(+). Functionally, part of the ABC transporter complex PstSACB involved in phosphate import. Responsible for energy coupling to the transport system. This Borrelia garinii subsp. bavariensis (strain ATCC BAA-2496 / DSM 23469 / PBi) (Borreliella bavariensis) protein is Phosphate import ATP-binding protein PstB.